Here is an 831-residue protein sequence, read N- to C-terminus: AMP deaminase (831 aa).

Disordered regions lie at residues 26-45, 66-110, and 130-149; these read NPGANRDEEVAAAPSSQDTP, NGTQ…KLLN, and NAVVSSVGGPETDPGNMETT. 2 positions are modified to phosphoserine: serine 79 and serine 84. Residues histidine 319 and histidine 321 each contribute to the Zn(2+) site. Substrate contacts are provided by residues histidine 321 and 390-395; that span reads KFNLKY. Histidine 587 is a Zn(2+) binding site. Residue glutamate 590 coordinates substrate. Residue histidine 609 is the Proton acceptor of the active site. Aspartate 664 is a Zn(2+) binding site. 665-668 serves as a coordination point for substrate; sequence DPLQ. Phosphoserine is present on residues serine 758, serine 776, serine 780, and serine 782.

The protein belongs to the metallo-dependent hydrolases superfamily. Adenosine and AMP deaminases family. As to quaternary structure, homotetramer. Zn(2+) is required as a cofactor.

It is found in the cytoplasm. It carries out the reaction AMP + H2O + H(+) = IMP + NH4(+). It participates in purine metabolism; IMP biosynthesis via salvage pathway; IMP from AMP: step 1/1. In terms of biological role, AMP deaminase plays a critical role in energy metabolism. The sequence is that of AMP deaminase (ada1) from Schizosaccharomyces pombe (strain 972 / ATCC 24843) (Fission yeast).